The sequence spans 958 residues: DNA repair and recombination protein RDH54 (958 aa).

A disordered region spans residues 189 to 217 (EALSQNMGNPSPPTTSTTETVPSTKNDGG). A compositionally biased stretch (low complexity) spans 202 to 212 (TTSTTETVPST). Residues 333–521 (LENDSDISGC…FTIIDFINPG (189 aa)) form the Helicase ATP-binding domain. 380-387 (IPLTGLCK) lines the ATP pocket. The DEGH box motif lies at 506-509 (NDLN). A Glycyl lysine isopeptide (Lys-Gly) (interchain with G-Cter in ubiquitin) cross-link involves residue K649. The Helicase C-terminal domain occupies 665–824 (KLKVLMTLLE…DSEMRNKESS (160 aa)).

It belongs to the SNF2/RAD54 helicase family. As to quaternary structure, interacts with RAD51 and DMC1.

It is found in the nucleus. It catalyses the reaction ATP + H2O = ADP + phosphate + H(+). In terms of biological role, involved in the recombinational repair of double-strand breaks (DSB) in DNA during mitosis and meiosis. Has DNA dependent ATPase activity. Promotes D-loop (displacement loop) formation with RAD51 recombinase. Modifies the topology of double-stranded DNA during the D-loop reaction to facilitate the invasion of the homologous duplex molecule by the initiating single-stranded DNA substrate. Required for adaptation from G2/M checkpoint arrest induced by a double strand break, by participating in monitoring the extent of single-stranded DNA produced by resection of DNA ends. This role is distinct from its roles in recombination. Promotes colocalization of RAD51 and DMC1 during meiotic recombination. Involved in crossover interference. In Saccharomyces cerevisiae (strain ATCC 204508 / S288c) (Baker's yeast), this protein is DNA repair and recombination protein RDH54 (RDH54).